The sequence spans 257 residues: Golgi SNAP receptor complex member 1-2 (257 aa).

Residues 1–235 (MTESSLDLQE…GSIKRKRSRD (235 aa)) lie on the Cytoplasmic side of the membrane. At Asn-51 the chain carries Phosphoserine. Residues 113-147 (TQKLARHRDILHEYTQEFRRIKGNINSLREHAELL) adopt a coiled-coil conformation. The helical; Anchor for type IV membrane protein transmembrane segment at 236–256 (TLILSAVIAACTLFLIIYWLS) threads the bilayer. Residue Lys-257 is a topological domain, vesicular.

This sequence belongs to the GOSR1 family. As to quaternary structure, component of several multiprotein Golgi SNARE complexes.

The protein resides in the golgi apparatus membrane. Its subcellular location is the endoplasmic reticulum membrane. Functionally, involved in transport from the ER to the Golgi apparatus as well as in intra-Golgi transport. It belongs to a super-family of proteins called t-SNAREs or soluble NSF (N-ethylmaleimide-sensitive factor) attachment protein receptor. This Arabidopsis thaliana (Mouse-ear cress) protein is Golgi SNAP receptor complex member 1-2 (GOS12).